We begin with the raw amino-acid sequence, 687 residues long: Ribonuclease E (687 aa).

One can recognise an S1 motif domain in the interval 35-117; the sequence is GDIYLGVVEN…LTGNITLPGR (83 aa). 2 residues coordinate Mg(2+): aspartate 296 and aspartate 339. Zn(2+) contacts are provided by cysteine 397 and cysteine 400. The interval 650–687 is disordered; it reads PIKLTETMEESEVNAASTANRRRRRRSSASDSDTGEDS. The short motif at 670-678 is the C4 Arg-rich motif, necessary and sufficient to confer PNPase binding on another protein element; it reads RRRRRRSSA.

It belongs to the RNase E/G family. May form homodimers or higher order multimers. Interacts with polynucleotide phosphorylase (PNPase, pnp) via the C4 Arg-rich motif (residues 670-678). A homotetramer formed by a dimer of dimers. Mg(2+) is required as a cofactor. It depends on Zn(2+) as a cofactor.

The protein localises to the cytoplasm. The enzyme catalyses Endonucleolytic cleavage of single-stranded RNA in A- and U-rich regions.. In terms of biological role, endoribonuclease that plays a central role in rRNA and tRNA processing and mRNA decay. Has been shown to act on 9S rRNA (the precursor of 5S rRNA). This chain is Ribonuclease E, found in Nostoc sp. (strain PCC 7120 / SAG 25.82 / UTEX 2576).